The chain runs to 641 residues: Protein BCAP (641 aa).

4 coiled-coil regions span residues 83–144, 191–270, 299–375, and 487–599; these read HWPV…KQND, EKDN…RKLE, QKQK…EREQ, and FKLE…TLNA.

This sequence belongs to the ODF2 family.

It localises to the cytoplasm. Its subcellular location is the cytoskeleton. The protein localises to the microtubule organizing center. It is found in the centrosome. The protein resides in the centriole. It localises to the centriolar satellite. Its subcellular location is the cilium basal body. Its function is as follows. Acts as a suppressor of ciliogenesis, specifically, the initiation of ciliogenesis. The protein is Protein BCAP (odf2l) of Xenopus laevis (African clawed frog).